Here is a 254-residue protein sequence, read N- to C-terminus: MNITHVPEIHRTDKQHTENLRHWRKILGIAPFVSIVFPAIMYFISDEDSFKKSLLLRFITILLPFSYSAVQYAILLHTTPYYTLNLLFLAFAAISILSITALPINEWKGDDSLIFSIVLPSLFIPPTYLLSTSCRLVPGQTAFTDTGINVLIDILILLCPLVSLVLVCKEPEYRLLSAVPFPILILARLLNDRYCPSEKSAPPTAPWRVAILVLILTSAALIYAFMMWTPIAILNGYFGLLHKLRESFLSLRPD.

This sequence belongs to the UPF0328 family.

In Encephalitozoon cuniculi (strain GB-M1) (Microsporidian parasite), this protein is UPF0328 protein ECU01_0070/ECU01_1540/ECU02_1570/ECU04_0080/ECU08_2100.